The chain runs to 172 residues: uncharacterized protein (172 aa).

Positions 1 to 148 (MANSQKVIDV…TIHDFFENGN (148 aa)) constitute a Ferritin-like diiron domain.

This is an uncharacterized protein from Ureaplasma urealyticum (Ureaplasma urealyticum biotype 2).